The following is a 467-amino-acid chain: ATP-dependent protease ATPase subunit HslU (467 aa).

ATP-binding positions include valine 22 and 64-69; that span reads GVGKTE. The interval 149–192 is disordered; it reads QTNNPLESLFGGAIPNFGQNNEDEEEPPTEEIKTKRSEIKRQLE. The segment covering 178 to 192 has biased composition (basic and acidic residues); it reads EEIKTKRSEIKRQLE. Residues aspartate 280, glutamate 345, and arginine 417 each contribute to the ATP site.

Belongs to the ClpX chaperone family. HslU subfamily. As to quaternary structure, a double ring-shaped homohexamer of HslV is capped on each side by a ring-shaped HslU homohexamer. The assembly of the HslU/HslV complex is dependent on binding of ATP.

The protein resides in the cytoplasm. Functionally, ATPase subunit of a proteasome-like degradation complex; this subunit has chaperone activity. The binding of ATP and its subsequent hydrolysis by HslU are essential for unfolding of protein substrates subsequently hydrolyzed by HslV. HslU recognizes the N-terminal part of its protein substrates and unfolds these before they are guided to HslV for hydrolysis. In Staphylococcus aureus (strain Mu3 / ATCC 700698), this protein is ATP-dependent protease ATPase subunit HslU.